We begin with the raw amino-acid sequence, 279 residues long: Phosphatidylglycerol--prolipoprotein diacylglyceryl transferase (279 aa).

7 helical membrane passes run 14-34 (IAFS…ACAI), 62-82 (YFLW…ILIY), 106-126 (FVGI…IASY), 136-156 (LLIY…FGRI), 190-210 (PSQL…VMWA), 218-238 (GLLI…AEFY), and 252-272 (LSMG…ILLY). R155 provides a ligand contact to a 1,2-diacyl-sn-glycero-3-phospho-(1'-sn-glycerol).

The protein belongs to the Lgt family.

It localises to the cell inner membrane. The catalysed reaction is L-cysteinyl-[prolipoprotein] + a 1,2-diacyl-sn-glycero-3-phospho-(1'-sn-glycerol) = an S-1,2-diacyl-sn-glyceryl-L-cysteinyl-[prolipoprotein] + sn-glycerol 1-phosphate + H(+). The protein operates within protein modification; lipoprotein biosynthesis (diacylglyceryl transfer). Functionally, catalyzes the transfer of the diacylglyceryl group from phosphatidylglycerol to the sulfhydryl group of the N-terminal cysteine of a prolipoprotein, the first step in the formation of mature lipoproteins. This chain is Phosphatidylglycerol--prolipoprotein diacylglyceryl transferase, found in Helicobacter pylori (strain HPAG1).